Reading from the N-terminus, the 549-residue chain is Glucose-6-phosphate isomerase (549 aa).

Residue Glu355 is the Proton donor of the active site. Catalysis depends on residues His386 and Lys514.

This sequence belongs to the GPI family.

It localises to the cytoplasm. The catalysed reaction is alpha-D-glucose 6-phosphate = beta-D-fructose 6-phosphate. It functions in the pathway carbohydrate biosynthesis; gluconeogenesis. It participates in carbohydrate degradation; glycolysis; D-glyceraldehyde 3-phosphate and glycerone phosphate from D-glucose: step 2/4. In terms of biological role, catalyzes the reversible isomerization of glucose-6-phosphate to fructose-6-phosphate. The sequence is that of Glucose-6-phosphate isomerase from Aeromonas salmonicida (strain A449).